A 491-amino-acid polypeptide reads, in one-letter code: Fatty acyl-CoA reductase 1 (491 aa).

It belongs to the fatty acyl-CoA reductase family. In terms of tissue distribution, expressed in the endodermal cell layer surrounding the central vasculature in roots. Expressed in the hilum region of seeds. Expressed in lateral root tips, cotyledons, the shoot apex, young leaves, petals, stamen filaments, and receptacle of siliques.

The enzyme catalyses a long-chain fatty acyl-CoA + 2 NADPH + 2 H(+) = a long-chain primary fatty alcohol + 2 NADP(+) + CoA. Functionally, catalyzes the reduction of fatty acyl-CoA to fatty alcohols. Catalyzes specifically the formation of C18:0 and C22:0 fatty alcohols. Provides the fatty alcohols required for synthesis of suberin in roots, seed coat and wound-induced leaf tissue. Provides the fatty alcohols required for synthesis of alkyl hydroxycinnamates in root waxes. This chain is Fatty acyl-CoA reductase 1, found in Arabidopsis thaliana (Mouse-ear cress).